Here is a 164-residue protein sequence, read N- to C-terminus: Ion-translocating oxidoreductase complex subunit G (164 aa).

FMN phosphoryl threonine is present on Thr125.

It belongs to the RnfG family. The complex is composed of six subunits: RnfA, RnfB, RnfC, RnfD, RnfE and RnfG. FMN serves as cofactor.

Part of a membrane-bound complex that couples electron transfer with translocation of ions across the membrane. The sequence is that of Ion-translocating oxidoreductase complex subunit G from Buchnera aphidicola subsp. Acyrthosiphon pisum (strain APS) (Acyrthosiphon pisum symbiotic bacterium).